We begin with the raw amino-acid sequence, 628 residues long: Hemocyanin II (628 aa).

Residue Thr-1 is modified to Blocked amino end (Thr); partial. Cu cation is bound by residues His-173, His-177, His-204, His-324, His-328, and His-364. Residue Asn-449 is glycosylated (N-linked (GlcNAc...) asparagine). Cystine bridges form between Cys-534-Cys-576 and Cys-536-Cys-583.

This sequence belongs to the tyrosinase family. Hemocyanin subfamily. In terms of assembly, hexamer or a multiple thereof. As to expression, hemolymph.

It is found in the secreted. Its subcellular location is the extracellular space. Hemocyanins are copper-containing oxygen carriers occurring freely dissolved in the hemolymph of many mollusks and arthropods. The polypeptide is Hemocyanin II (Limulus polyphemus (Atlantic horseshoe crab)).